Here is a 319-residue protein sequence, read N- to C-terminus: Ferrochelatase (319 aa).

The Fe cation site is built by H192 and E271.

This sequence belongs to the ferrochelatase family.

It is found in the cytoplasm. It carries out the reaction heme b + 2 H(+) = protoporphyrin IX + Fe(2+). It participates in porphyrin-containing compound metabolism; protoheme biosynthesis; protoheme from protoporphyrin-IX: step 1/1. Functionally, catalyzes the ferrous insertion into protoporphyrin IX. The sequence is that of Ferrochelatase from Geotalea uraniireducens (strain Rf4) (Geobacter uraniireducens).